Reading from the N-terminus, the 225-residue chain is Histone H3-like centromeric protein cid (225 aa).

Over residues 1 to 11 (MPRHSRAKRAP) the composition is skewed to basic residues. Residues 1–131 (MPRHSRAKRA…KAANPMSRAK (131 aa)) are disordered. Polar residues predominate over residues 43–52 (FTTSQLTLQD). Phosphoserine is present on residues Ser74 and Ser75. A Phosphothreonine modification is found at Thr76. Ser77 carries the phosphoserine modification. Polar residues predominate over residues 86 to 103 (RYPTTRSPQTRRMTVQQE). The H3-like stretch occupies residues 133 to 225 (MDREIRRLQH…AYICDRGRQF (93 aa)).

Belongs to the histone H3 family. Forms a nucleosome-like histone octamer containing two molecules each of H2A, H2B, cid and H4 assembled in one cid-H4 heterotetramer and two H2A-H2B heterodimers. The cid-H4 heterotetramer is more compact and structurally more rigid than corresponding H3-H4 heterotetramers. Interacts with the condensin subunit Cap-G. Interacts with Chrac-14.

It localises to the nucleus. The protein resides in the chromosome. Its subcellular location is the centromere. The protein localises to the kinetochore. Functionally, histone H3-like variant which exclusively replaces conventional H3 in the nucleosome core of centromeric chromatin at the inner plate of the kinetochore. Required for recruitment and assembly of kinetochore proteins, mitotic progression and chromosome segregation. May serve as an epigenetic mark that propagates centromere identity through replication and cell division. The chain is Histone H3-like centromeric protein cid from Drosophila melanogaster (Fruit fly).